Reading from the N-terminus, the 192-residue chain is Adenylate kinase (192 aa).

10–15 (GAGKGT) lines the ATP pocket. Positions 30-59 (STGDMLRTAVAQATEVGKRAKAVMDAGQLV) are NMP. AMP-binding positions include T31, R36, 57 to 59 (QLV), 85 to 88 (GYPR), and Q92. Positions 126 to 142 (NRVTETVAAGGTVRSDD) are LID. Position 127 (R127) interacts with ATP. AMP-binding residues include R139 and R150. A178 is a binding site for ATP.

This sequence belongs to the adenylate kinase family. In terms of assembly, monomer.

Its subcellular location is the cytoplasm. It carries out the reaction AMP + ATP = 2 ADP. It participates in purine metabolism; AMP biosynthesis via salvage pathway; AMP from ADP: step 1/1. Its function is as follows. Catalyzes the reversible transfer of the terminal phosphate group between ATP and AMP. Plays an important role in cellular energy homeostasis and in adenine nucleotide metabolism. The chain is Adenylate kinase from Rhizobium meliloti (strain 1021) (Ensifer meliloti).